A 338-amino-acid polypeptide reads, in one-letter code: Ketol-acid reductoisomerase (NADP(+)) (338 aa).

The 181-residue stretch at 1–181 (MKVFYDKDAD…GGGRAGIIET (181 aa)) folds into the KARI N-terminal Rossmann domain. NADP(+)-binding positions include 24 to 27 (YGSQ), Arg47, and Ser52. The active site involves His107. Gly133 contributes to the NADP(+) binding site. The KARI C-terminal knotted domain maps to 182–327 (NFREETETDL…SKLRAMMPWI (146 aa)). Residues Asp190, Glu194, Glu226, and Glu230 each contribute to the Mg(2+) site. Residue Ser251 participates in substrate binding.

The protein belongs to the ketol-acid reductoisomerase family. It depends on Mg(2+) as a cofactor.

The enzyme catalyses (2R)-2,3-dihydroxy-3-methylbutanoate + NADP(+) = (2S)-2-acetolactate + NADPH + H(+). The catalysed reaction is (2R,3R)-2,3-dihydroxy-3-methylpentanoate + NADP(+) = (S)-2-ethyl-2-hydroxy-3-oxobutanoate + NADPH + H(+). Its pathway is amino-acid biosynthesis; L-isoleucine biosynthesis; L-isoleucine from 2-oxobutanoate: step 2/4. It functions in the pathway amino-acid biosynthesis; L-valine biosynthesis; L-valine from pyruvate: step 2/4. Its function is as follows. Involved in the biosynthesis of branched-chain amino acids (BCAA). Catalyzes an alkyl-migration followed by a ketol-acid reduction of (S)-2-acetolactate (S2AL) to yield (R)-2,3-dihydroxy-isovalerate. In the isomerase reaction, S2AL is rearranged via a Mg-dependent methyl migration to produce 3-hydroxy-3-methyl-2-ketobutyrate (HMKB). In the reductase reaction, this 2-ketoacid undergoes a metal-dependent reduction by NADPH to yield (R)-2,3-dihydroxy-isovalerate. This chain is Ketol-acid reductoisomerase (NADP(+)), found in Paraburkholderia xenovorans (strain LB400).